Consider the following 1268-residue polypeptide: SR-related and CTD-associated factor 8 (1268 aa).

The 139-residue stretch at 1–139 (MEAVKTFNSE…PLLDMAAGIP (139 aa)) folds into the CID domain. Threonine 6 bears the Phosphothreonine mark. A Glycyl lysine isopeptide (Lys-Gly) (interchain with G-Cter in SUMO1) cross-link involves residue lysine 18. At serine 273 the chain carries Phosphoserine. Disordered regions lie at residues 322–355 (QQQP…QQHF) and 385–469 (EIFE…PVRS). The span at 342-354 (HSASPSQGSSQQH) shows a compositional bias: polar residues. The segment covering 394–443 (VAVRSRSRTHSRSRSRSPRKRRSRSRSGSRKRKHRKRSRSRSRERKRKSS) has biased composition (basic residues). Over residues 447 to 461 (SSERRAREREKERQK) the composition is skewed to basic and acidic residues. The 75-residue stretch at 477–551 (TTLWVGQVDK…KVIKIAWALN (75 aa)) folds into the RRM domain. Phosphothreonine is present on threonine 615. The residue at position 617 (serine 617) is a Phosphoserine. The tract at residues 753–808 (AGNVFNPPSKAEPEEKVPHLTEHQIPSGENTRPVIPSDIPSSAPMLAQPPGASNTS) is disordered. Residues 763–774 (AEPEEKVPHLTE) are compositionally biased toward basic and acidic residues. Residues arginine 915, arginine 925, and arginine 936 each carry the asymmetric dimethylarginine modification. The tract at residues 947–1063 (QRGIPPPSVL…GRDHFGRPPV (117 aa)) is disordered. Positions 961–970 (HPPPRGPFPP) are enriched in pro residues. Basic and acidic residues-rich tracts occupy residues 1009–1025 (EGDR…REGI) and 1032–1063 (DVRD…RPPV). Arginine 1071 bears the Asymmetric dimethylarginine mark. A disordered region spans residues 1199 to 1268 (ATSQRKGENV…VVESTETEGT (70 aa)). Residues 1249-1262 (GTAAGVESEAVVES) show a composition bias toward low complexity.

In terms of assembly, interacts with POLR2A; via C-terminal heptapeptide repeat domain (CTD) phosphorylated at 'Ser-2' and 'Ser-5'. Identified in a complex with CDC5L and other spliceosomal proteins.

The protein localises to the nucleus. It localises to the nucleus matrix. In terms of biological role, anti-terminator protein required to prevent early mRNA termination during transcription. Together with SCAF4, acts by suppressing the use of early, alternative poly(A) sites, thereby preventing the accumulation of non-functional truncated proteins. Mechanistically, associates with the phosphorylated C-terminal heptapeptide repeat domain (CTD) of the largest RNA polymerase II subunit (POLR2A), and subsequently binds nascent RNA upstream of early polyadenylation sites to prevent premature mRNA transcript cleavage and polyadenylation. Independently of SCAF4, also acts as a positive regulator of transcript elongation. The sequence is that of SR-related and CTD-associated factor 8 from Rattus norvegicus (Rat).